A 508-amino-acid polypeptide reads, in one-letter code: Glycerol kinase (508 aa).

T14 is an ADP binding site. Residues T14, T15, and S16 each coordinate ATP. Position 14 (T14) interacts with sn-glycerol 3-phosphate. ADP is bound at residue R18. Sn-glycerol 3-phosphate contacts are provided by R84, E85, Y136, and D245. Glycerol contacts are provided by R84, E85, Y136, D245, and Q246. T267 and G314 together coordinate ADP. T267, G314, and Q318 together coordinate ATP. N419 provides a ligand contact to ADP.

It belongs to the FGGY kinase family.

It catalyses the reaction glycerol + ATP = sn-glycerol 3-phosphate + ADP + H(+). The protein operates within polyol metabolism; glycerol degradation via glycerol kinase pathway; sn-glycerol 3-phosphate from glycerol: step 1/1. Inhibited by fructose 1,6-bisphosphate (FBP). In terms of biological role, key enzyme in the regulation of glycerol uptake and metabolism. Catalyzes the phosphorylation of glycerol to yield sn-glycerol 3-phosphate. This chain is Glycerol kinase, found in Bordetella pertussis (strain Tohama I / ATCC BAA-589 / NCTC 13251).